We begin with the raw amino-acid sequence, 156 residues long: Transcription antitermination protein NusB (156 aa).

This sequence belongs to the NusB family.

Involved in transcription antitermination. Required for transcription of ribosomal RNA (rRNA) genes. Binds specifically to the boxA antiterminator sequence of the ribosomal RNA (rrn) operons. The protein is Transcription antitermination protein NusB of Syntrophotalea carbinolica (strain DSM 2380 / NBRC 103641 / GraBd1) (Pelobacter carbinolicus).